Here is a 209-residue protein sequence, read N- to C-terminus: Guanylate kinase (209 aa).

The 179-residue stretch at 7-185 folds into the Guanylate kinase-like domain; the sequence is GNLYIVAAPS…AAMELQSIVI (179 aa). ATP is bound at residue 14-21; that stretch reads APSGGGKT.

Belongs to the guanylate kinase family.

It localises to the cytoplasm. The enzyme catalyses GMP + ATP = GDP + ADP. In terms of biological role, essential for recycling GMP and indirectly, cGMP. The protein is Guanylate kinase of Legionella pneumophila (strain Paris).